The sequence spans 141 residues: Nucleoside diphosphate kinase (141 aa).

ATP contacts are provided by Lys11, Phe59, Arg87, Thr93, Arg104, and Asn114. Residue His117 is the Pros-phosphohistidine intermediate of the active site.

It belongs to the NDK family. Homotetramer. The cofactor is Mg(2+).

The protein localises to the cytoplasm. It carries out the reaction a 2'-deoxyribonucleoside 5'-diphosphate + ATP = a 2'-deoxyribonucleoside 5'-triphosphate + ADP. It catalyses the reaction a ribonucleoside 5'-diphosphate + ATP = a ribonucleoside 5'-triphosphate + ADP. Functionally, major role in the synthesis of nucleoside triphosphates other than ATP. The ATP gamma phosphate is transferred to the NDP beta phosphate via a ping-pong mechanism, using a phosphorylated active-site intermediate. The protein is Nucleoside diphosphate kinase of Haemophilus influenzae (strain ATCC 51907 / DSM 11121 / KW20 / Rd).